Consider the following 1169-residue polypeptide: LGFDPPHQSDTRTIYIANRFPQNGLYTPQKFIDNRIISSKYTVWNFVPKNLFEQFRRVANFYFLIIFLVQLMIDTPTSPITSGLPLFFVITVTAIKQGYEDWLRHNSDNEVNGAPVYVVRSGGLVKTRSKNIRVGDIVRIAKDEIFPADLVLLSSDRLDGSCHVTTASLDGETNLKTHVAVPETAVLQTVANLDTLVAVIECQQPEADLYRFMGRMIITQQMEEIVRPLGPESLLLRGARLKNTKEIFGVAVYTGMETKMALNYKSKSQKRSAVEKSMNTFLIIYLIILISEAIISTILKYTWQAEEKWDEPWYNQKTEHQRNSSKILRFISDFLAFLVLYNFIIPISLYVTVEMQKFLGSFFIGWDLDLYHEESDQKAQVNTSDLNEELGQVEYVFTDKTGTLTENEMQFRECSIHGMKYQEINGRLVPEGPTPDSSEGNLSYLSSLSHVNSLSHLTSSSSFRTSPENDTELIKEHDLFFKAVSLCHTVQISSVQTDGIGDGPWQSSLAPSQLEYYASSPDEKALVEAAARIGIVFVGNTEETMEVKILGKLERYKLLHVLEFDSDRRRMSVIVQAPSGERFLFAKGAESSILPKCIGGEIEKTRIHVDEFALKGLRTLCVAYRQFTSKEYEVIDRRLFEARTALQQREEKLADVFHYIEKDLILLGATAVEDRLQDKVRETIEALRMAGIKVWVLTGDKHETAVSVSLSCGHFHRTMNILELTNQKSDSECAEQLRQLARRITEDHVIQHGLVVDGTSLSLALREHEKLFMEVCRNCSAVLCCRMAPLQKAKVIRLIKISPEKPITIGCWDGANDVSMIQEAHVGIGIMGKERRQAARNSDYAIARFKFLSKLLFVHGHFYYIRIATLVQYFFYKNVCFITPQFLYQFYCLFSQQTLYDSVYLTLYNICFTSLPILIYSLLEQHIDPHILQNKPTLYRDISKNRLLSIKTFLYWTILGFSRSFIFLFGSYFLIGKDASLLGNGQMFGNWTFGTLVFTVMVITVTVKMALETHFWTWINHLVTWGSIIFYFVFSLFYGGILWPFLGSQNMYFVFIQLVSSGSAWFAIILMVVTCLFLDVMKKVFDRQLHPTSTEKAQLTETNSSIKCVDSLCCFPEGETTCTSVRRMLERVIGRCSPTHISRSWSASDPFYTNDRSILTLSTMDSSTC.

The Cytoplasmic segment spans residues 1–47 (LGFDPPHQSDTRTIYIANRFPQNGLYTPQKFIDNRIISSKYTVWNFV). Residues 48–69 (PKNLFEQFRRVANFYFLIIFLV) form a helical membrane-spanning segment. Topologically, residues 70–74 (QLMID) are extracellular. The chain crosses the membrane as a helical span at residues 75-96 (TPTSPITSGLPLFFVITVTAIK). Residues 97-281 (QGYEDWLRHN…SAVEKSMNTF (185 aa)) are Cytoplasmic-facing. The chain crosses the membrane as a helical span at residues 282–303 (LIIYLIILISEAIISTILKYTW). Residues 304–333 (QAEEKWDEPWYNQKTEHQRNSSKILRFISD) are Extracellular-facing. A helical transmembrane segment spans residues 334–351 (FLAFLVLYNFIIPISLYV). Residues 352–868 (TVEMQKFLGS…HGHFYYIRIA (517 aa)) are Cytoplasmic-facing. D399 (4-aspartylphosphate intermediate) is an active-site residue. Residues D399, K400, T401, E523, F564, K587, R618, T698, G699, D700, R786, and K792 each contribute to the ATP site. Mg(2+) is bound at residue D399. T401 serves as a coordination point for Mg(2+). The tract at residues 794 to 802 (KVIRLIKIS) is required for binding to the RING-finger of HLTF. Position 813 (D813) interacts with Mg(2+). 2 residues coordinate ATP: N816 and D817. D817 lines the Mg(2+) pocket. Residues 869 to 890 (TLVQYFFYKNVCFITPQFLYQF) form a helical membrane-spanning segment. Residues 891 to 902 (YCLFSQQTLYDS) are Extracellular-facing. A helical membrane pass occupies residues 903 to 922 (VYLTLYNICFTSLPILIYSL). Residues 923–952 (LEQHIDPHILQNKPTLYRDISKNRLLSIKT) lie on the Cytoplasmic side of the membrane. A helical membrane pass occupies residues 953–974 (FLYWTILGFSRSFIFLFGSYFL). Residues 975–989 (IGKDASLLGNGQMFG) are Extracellular-facing. The helical transmembrane segment at 990–1012 (NWTFGTLVFTVMVITVTVKMALE) threads the bilayer. Residues 1013–1017 (THFWT) are Cytoplasmic-facing. A helical membrane pass occupies residues 1018-1039 (WINHLVTWGSIIFYFVFSLFYG). Topologically, residues 1040–1057 (GILWPFLGSQNMYFVFIQ) are extracellular. Residues 1058–1082 (LVSSGSAWFAIILMVVTCLFLDVMK) traverse the membrane as a helical segment. Residues 1083–1169 (KVFDRQLHPT…TLSTMDSSTC (87 aa)) are Cytoplasmic-facing. Phosphoserine is present on S1146.

This sequence belongs to the cation transport ATPase (P-type) (TC 3.A.3) family. Type IV subfamily. As to quaternary structure, component of a P4-ATPase flippase complex which consists of a catalytic alpha subunit ATP11B and an accessory beta subunit TMEM30A. Interacts with HLTF (via the RING-finger). Mg(2+) is required as a cofactor. As to expression, ubiquitously expressed.

It localises to the recycling endosome membrane. The protein localises to the early endosome. Its subcellular location is the endoplasmic reticulum. The protein resides in the golgi apparatus. It is found in the trans-Golgi network. It localises to the nucleus inner membrane. It catalyses the reaction ATP + H2O + phospholipidSide 1 = ADP + phosphate + phospholipidSide 2.. The enzyme catalyses a 1,2-diacyl-sn-glycero-3-phospho-L-serine(out) + ATP + H2O = a 1,2-diacyl-sn-glycero-3-phospho-L-serine(in) + ADP + phosphate + H(+). It carries out the reaction a 1,2-diacyl-sn-glycero-3-phosphoethanolamine(out) + ATP + H2O = a 1,2-diacyl-sn-glycero-3-phosphoethanolamine(in) + ADP + phosphate + H(+). Functionally, catalytic component of a P4-ATPase flippase complex which catalyzes the hydrolysis of ATP coupled to the transport of aminophospholipids, phosphatidylserines (PS) and phosphatidylethanolamines (PE), from the outer to the inner leaflet of intracellular membranes. May contribute to the maintenance of membrane lipid asymmetry in endosome compartment. Its function is as follows. Appears to play a role in the subnuclear trafficking of transcription factors with RING motifs. This is Phospholipid-transporting ATPase IF (ATP11B) from Oryctolagus cuniculus (Rabbit).